We begin with the raw amino-acid sequence, 523 residues long: Carboxypeptidase Y (523 aa).

Residues 1–20 (MILHTYIILSLLTIFPKAIG) form the signal peptide. A propeptide spanning residues 21–107 (LSLQMPMALE…QELPNYRLRV (87 aa)) is cleaved from the precursor. Intrachain disulfides connect Cys162/Cys401, Cys296/Cys310, Cys320/Cys343, Cys327/Cys336, and Cys365/Cys371. Asn193 is a glycosylation site (N-linked (GlcNAc...) asparagine). Ser249 is a catalytic residue. The N-linked (GlcNAc...) asparagine glycan is linked to Asn271. The active site involves Asp441. Asn484 and Asn487 each carry an N-linked (GlcNAc...) asparagine glycan. Residue His498 is part of the active site.

The protein belongs to the peptidase S10 family.

It is found in the vacuole. It carries out the reaction Release of a C-terminal amino acid with broad specificity.. Its function is as follows. Involved in degradation of small peptides. This chain is Carboxypeptidase Y (PRC1), found in Komagataella phaffii (strain GS115 / ATCC 20864) (Yeast).